A 424-amino-acid polypeptide reads, in one-letter code: UDP-N-acetylglucosamine 1-carboxyvinyltransferase (424 aa).

22–23 (KN) lines the phosphoenolpyruvate pocket. R93 provides a ligand contact to UDP-N-acetyl-alpha-D-glucosamine. C117 functions as the Proton donor in the catalytic mechanism. Position 117 is a 2-(S-cysteinyl)pyruvic acid O-phosphothioketal (C117). UDP-N-acetyl-alpha-D-glucosamine is bound by residues 162–165 (KVSV), D307, and I329.

The protein belongs to the EPSP synthase family. MurA subfamily.

The protein resides in the cytoplasm. The enzyme catalyses phosphoenolpyruvate + UDP-N-acetyl-alpha-D-glucosamine = UDP-N-acetyl-3-O-(1-carboxyvinyl)-alpha-D-glucosamine + phosphate. Its pathway is cell wall biogenesis; peptidoglycan biosynthesis. Its function is as follows. Cell wall formation. Adds enolpyruvyl to UDP-N-acetylglucosamine. The chain is UDP-N-acetylglucosamine 1-carboxyvinyltransferase from Actinobacillus pleuropneumoniae serotype 7 (strain AP76).